The sequence spans 290 residues: Diaminopimelate epimerase (290 aa).

Residues N17, Q49, and N69 each coordinate substrate. The active-site Proton donor is the C78. Substrate is bound by residues 79-80 (GN), N165, N198, and 216-217 (ER). The active-site Proton acceptor is C225. 226 to 227 (GS) serves as a coordination point for substrate.

Belongs to the diaminopimelate epimerase family. Homodimer.

The protein resides in the cytoplasm. The catalysed reaction is (2S,6S)-2,6-diaminopimelate = meso-2,6-diaminopimelate. It participates in amino-acid biosynthesis; L-lysine biosynthesis via DAP pathway; DL-2,6-diaminopimelate from LL-2,6-diaminopimelate: step 1/1. Its function is as follows. Catalyzes the stereoinversion of LL-2,6-diaminopimelate (L,L-DAP) to meso-diaminopimelate (meso-DAP), a precursor of L-lysine and an essential component of the bacterial peptidoglycan. This chain is Diaminopimelate epimerase, found in Methylocella silvestris (strain DSM 15510 / CIP 108128 / LMG 27833 / NCIMB 13906 / BL2).